The following is a 452-amino-acid chain: MVAVAILAAGKGTRMKSQLPKVLHRLGSQTLLDRVLASLTPLNVDRCFVIVGYQGDRVRESWAHRTDIEFVEQTQQLGTGHAVQQLLPHLKGYQGDLLVLNGDVPLLRGETLEALVSGHQRSGAAATLLTAQLNQPKGYGRVFCDATSRVCEIIEDRDCTPAQRQNPRVNAGVYCFRWPDLEAVLPNLSTANDQQEYYLTEAITYLDPVSAVEVADSQEILGINDRLQLADSFRILQERIRQQWMLAGVTLVDPTSITIDETVQLGTDVVIEPQTHLRGNTVIGNNCSIGPNSLITNSQIGDGVTVQMSVISDSTIAANSKIGPFAHLRGAAAIGEACRIGNFVEVKKSTVGDRTNVAHLSYLGDATLGQRVNVGAGTITANYDGVSKHPTVIGDRSKTGANSVLVAPVTIGQDVTIAAGSTINKDVPDGALAIARSRQTIHENWSTPTTEQ.

A pyrophosphorylase region spans residues 1–226 (MVAVAILAAG…SQEILGINDR (226 aa)). Residues 7 to 10 (LAAG), Lys21, Gln73, and 78 to 79 (GT) contribute to the UDP-N-acetyl-alpha-D-glucosamine site. Residue Asp103 participates in Mg(2+) binding. UDP-N-acetyl-alpha-D-glucosamine is bound by residues Gly140, Glu155, Asn170, and Asn224. Asn224 is a binding site for Mg(2+). Residues 227 to 247 (LQLADSFRILQERIRQQWMLA) are linker. Positions 248-452 (GVTLVDPTSI…ENWSTPTTEQ (205 aa)) are N-acetyltransferase. The UDP-N-acetyl-alpha-D-glucosamine site is built by Arg329 and Lys347. His359 acts as the Proton acceptor in catalysis. Tyr362 and Asn373 together coordinate UDP-N-acetyl-alpha-D-glucosamine. Acetyl-CoA contacts are provided by residues Ala376, 382–383 (NY), Ala419, and Arg436.

The protein in the N-terminal section; belongs to the N-acetylglucosamine-1-phosphate uridyltransferase family. In the C-terminal section; belongs to the transferase hexapeptide repeat family. In terms of assembly, homotrimer. Mg(2+) serves as cofactor.

The protein localises to the cytoplasm. The enzyme catalyses alpha-D-glucosamine 1-phosphate + acetyl-CoA = N-acetyl-alpha-D-glucosamine 1-phosphate + CoA + H(+). The catalysed reaction is N-acetyl-alpha-D-glucosamine 1-phosphate + UTP + H(+) = UDP-N-acetyl-alpha-D-glucosamine + diphosphate. It participates in nucleotide-sugar biosynthesis; UDP-N-acetyl-alpha-D-glucosamine biosynthesis; N-acetyl-alpha-D-glucosamine 1-phosphate from alpha-D-glucosamine 6-phosphate (route II): step 2/2. Its pathway is nucleotide-sugar biosynthesis; UDP-N-acetyl-alpha-D-glucosamine biosynthesis; UDP-N-acetyl-alpha-D-glucosamine from N-acetyl-alpha-D-glucosamine 1-phosphate: step 1/1. It functions in the pathway bacterial outer membrane biogenesis; LPS lipid A biosynthesis. In terms of biological role, catalyzes the last two sequential reactions in the de novo biosynthetic pathway for UDP-N-acetylglucosamine (UDP-GlcNAc). The C-terminal domain catalyzes the transfer of acetyl group from acetyl coenzyme A to glucosamine-1-phosphate (GlcN-1-P) to produce N-acetylglucosamine-1-phosphate (GlcNAc-1-P), which is converted into UDP-GlcNAc by the transfer of uridine 5-monophosphate (from uridine 5-triphosphate), a reaction catalyzed by the N-terminal domain. This is Bifunctional protein GlmU from Synechococcus sp. (strain ATCC 27144 / PCC 6301 / SAUG 1402/1) (Anacystis nidulans).